The following is a 1477-amino-acid chain: Oligomycin resistance ATP-dependent permease YOR1 (1477 aa).

The interval Met1–Lys48 is disordered. Over Met1–Gln206 the chain is Cytoplasmic. Residues Ser10 and Ser24 each carry the phosphoserine modification. The span at Asp36–Lys48 shows a compositional bias: basic and acidic residues. Residue Thr53 is modified to Phosphothreonine. Positions Asp71–Glu73 match the Diacidic ER export motif DxE motif. Residues Tyr207 to Ile227 form a helical membrane-spanning segment. In terms of domain architecture, ABC transmembrane type-1 1 spans Tyr207–Asp493. At Thr228–Gly249 the chain is on the extracellular side. A helical membrane pass occupies residues Ile250 to Phe270. The Cytoplasmic segment spans residues Phe271–Pro328. Residues Phe329–Gly349 traverse the membrane as a helical segment. Topologically, residues Pro350–Gly357 are extracellular. Residues Ile358–Phe370 traverse the membrane as a helical segment. Residues Lys371 to Asn433 lie on the Cytoplasmic side of the membrane. Residues Phe434–Met454 form a helical membrane-spanning segment. Residues Tyr455–Ser478 lie on the Extracellular side of the membrane. Residues Leu479–Gly499 form a helical membrane-spanning segment. Topologically, residues Arg500 to Glu615 are cytoplasmic. The disordered stretch occupies residues Lys552 to Asp595. Over residues Lys581–Asp595 the composition is skewed to basic and acidic residues. The ABC transporter 1 domain maps to Lys581 to Phe808. Residues Phe616–Gly636 form a helical membrane-spanning segment. An ATP-binding site is contributed by Gly621–Ser628. The Extracellular segment spans residues Ser637–Trp892. 3 N-linked (GlcNAc...) asparagine glycosylation sites follow: Asn661, Asn759, and Asn799. Residues Gly893 to Phe913 form a helical membrane-spanning segment. One can recognise an ABC transmembrane type-1 2 domain in the interval Leu897–Asn1175. The Cytoplasmic segment spans residues Ser914–Phe940. Residues Phe941–Ile961 traverse the membrane as a helical segment. Residues Met962–Cys1027 lie on the Extracellular side of the membrane. A helical membrane pass occupies residues Ile1028–Ile1048. Residues Ala1049–Trp1117 lie on the Cytoplasmic side of the membrane. Residues Val1118–Val1138 traverse the membrane as a helical segment. Residues Thr1139–Ala1141 lie on the Extracellular side of the membrane. The chain crosses the membrane as a helical span at residues Phe1142 to Leu1162. Residues Leu1163 to Ser1477 lie on the Cytoplasmic side of the membrane. Positions Ile1213–Ser1464 constitute an ABC transporter 2 domain. ATP is bound at residue Gly1247 to Ser1254.

This sequence belongs to the ABC transporter superfamily. ABCC family. Conjugate transporter (TC 3.A.1.208) subfamily.

Its subcellular location is the cell membrane. It carries out the reaction a 1,2-diacyl-sn-glycero-3-phosphoethanolamine(in) + ATP + H2O = a 1,2-diacyl-sn-glycero-3-phosphoethanolamine(out) + ADP + phosphate + H(+). It catalyses the reaction Cd(2+)(in) + ATP + H2O = Cd(2+)(out) + ADP + phosphate + H(+). The enzyme catalyses an S-substituted glutathione(in) + ATP + H2O = an S-substituted glutathione(out) + ADP + phosphate + H(+). Functions as a pleiotropic drug pump at the plasma membrane to clear toxic substances from the cytosol. Organic anion transporter involved in the detoxification of a wide range of toxic environmental organic anions that contain carboxyl groups. Required for tolerance to reveromycin A, tautomycin and leptomycin B. Required for oligomycin resistance. Required for rhodamine B resistance. Mediates the ATP-dependent efflux of rhodamine B. Involved in cadmium detoxification. Displays an energy-dependent efflux of cadmium and glutathione, suggesting that YOR1 transports both compounds as a bis-glutathionato-cadmium Cd-(GS)(2) complex. Confers resistance to rhodamine 6G and to doxorubicin. This is Oligomycin resistance ATP-dependent permease YOR1 from Saccharomyces cerevisiae (strain ATCC 204508 / S288c) (Baker's yeast).